Here is a 601-residue protein sequence, read N- to C-terminus: Elongation factor 4 (601 aa).

Positions 6 to 188 constitute a tr-type G domain; the sequence is EHIRNFSIIA…EIVRKIPAPE (183 aa). Residues 18 to 23 and 135 to 138 each bind GTP; these read DHGKST and NKID.

Belongs to the TRAFAC class translation factor GTPase superfamily. Classic translation factor GTPase family. LepA subfamily.

Its subcellular location is the cell inner membrane. It catalyses the reaction GTP + H2O = GDP + phosphate + H(+). Functionally, required for accurate and efficient protein synthesis under certain stress conditions. May act as a fidelity factor of the translation reaction, by catalyzing a one-codon backward translocation of tRNAs on improperly translocated ribosomes. Back-translocation proceeds from a post-translocation (POST) complex to a pre-translocation (PRE) complex, thus giving elongation factor G a second chance to translocate the tRNAs correctly. Binds to ribosomes in a GTP-dependent manner. The polypeptide is Elongation factor 4 (Hydrogenovibrio crunogenus (strain DSM 25203 / XCL-2) (Thiomicrospira crunogena)).